The sequence spans 579 residues: Protein inscuteable homolog (579 aa).

An important for interaction with GPSM2 region spans residues 74–89 (SVQRWMEDLKLMTECE). The PDZ-binding signature appears at 576 to 579 (ESFV).

In terms of assembly, interacts with ALS2CR19/PAR3B and GPSM1/AGS3. Interacts with F2RL2/PAR3. Interacts with GPSM2/LGN (via TPR repeat region). In terms of tissue distribution, expressed in brain, kidney, liver, testis and skin.

The protein resides in the cytoplasm. It is found in the cell cortex. In terms of biological role, may function as an adapter linking the Par3 complex to the GPSM1/GPSM2 complex. Involved in spindle orientation during mitosis. May regulate cell proliferation and differentiation in the developing nervous system. May play a role in the asymmetric division of fibroblasts and participate in the process of stratification of the squamous epithelium. The sequence is that of Protein inscuteable homolog (Insc) from Mus musculus (Mouse).